The chain runs to 367 residues: Molybdenum import ATP-binding protein ModC (367 aa).

One can recognise an ABC transporter domain in the interval 1-234 (MSSAALEVRL…PALSGGFGHE (234 aa)). ATP is bound at residue 33–40 (GPSGAGKS). Residues 293–366 (HISLHNILPV…IKSVAVDVLG (74 aa)) form the Mop domain.

Belongs to the ABC transporter superfamily. Molybdate importer (TC 3.A.1.8) family. As to quaternary structure, the complex is composed of two ATP-binding proteins (ModC), two transmembrane proteins (ModB) and a solute-binding protein (ModA).

The protein localises to the cell inner membrane. It catalyses the reaction molybdate(out) + ATP + H2O = molybdate(in) + ADP + phosphate + H(+). In terms of biological role, part of the ABC transporter complex ModABC involved in molybdenum import. Responsible for energy coupling to the transport system. This Granulibacter bethesdensis (strain ATCC BAA-1260 / CGDNIH1) protein is Molybdenum import ATP-binding protein ModC.